Consider the following 206-residue polypeptide: Cytidylate kinase (206 aa).

7 to 15 (GPAASGKGT) contacts ATP.

It belongs to the cytidylate kinase family. Type 1 subfamily.

It is found in the cytoplasm. The catalysed reaction is CMP + ATP = CDP + ADP. The enzyme catalyses dCMP + ATP = dCDP + ADP. In Azorhizobium caulinodans (strain ATCC 43989 / DSM 5975 / JCM 20966 / LMG 6465 / NBRC 14845 / NCIMB 13405 / ORS 571), this protein is Cytidylate kinase.